Reading from the N-terminus, the 118-residue chain is Hydrogenase maturation factor HypA (118 aa).

Ni(2+) is bound at residue H2. Zn(2+) contacts are provided by C73, C76, C89, and C92.

Belongs to the HypA/HybF family.

In terms of biological role, involved in the maturation of [NiFe] hydrogenases. Required for nickel insertion into the metal center of the hydrogenase. In Shewanella oneidensis (strain ATCC 700550 / JCM 31522 / CIP 106686 / LMG 19005 / NCIMB 14063 / MR-1), this protein is Hydrogenase maturation factor HypA.